The chain runs to 271 residues: MTPLVKDIIMSSTRMPALFLGHGSPMNVLEDNLYTRSWQKLGMTLPRPQAIVVVSAHWFTRGTGVTAMETPPTIHDFGGFPQALYDTHYPAPGSPALAQRLVELLAPIPVTLDKEAWGFDHGSWGVLIKMYPDADIPMVQLSIDSSKPAAWHFEMGRKLAALRDEGIMLVASGNVVHNLRTVKWHGDSSPYPWATSFNEYVKANLTWQGPVEQHPLVNYLDHEGGTLSNPTPEHYLPLLYVLGAWDGQEPITIPVEGIEMGSLSMLSVQIG.

The Zn(2+) site is built by histidine 22, histidine 57, histidine 177, and histidine 234.

It belongs to the DODA-type extradiol aromatic ring-opening dioxygenase family. Monomer. Zn(2+) is required as a cofactor.

The protein resides in the cytoplasm. It carries out the reaction L-dopa + O2 = 4-(L-alanin-3-yl)-2-hydroxy-cis,cis-muconate 6-semialdehyde + H(+). Its function is as follows. In vitro, opens the cyclic ring of dihydroxy-phenylalanine (DOPA) between carbons 4 and 5, thus producing an unstable seco-DOPA that rearranges nonenzymatically to betalamic acid. The physiological substrate is unknown. In Escherichia coli (strain K12), this protein is 4,5-DOPA dioxygenase extradiol (ygiD).